Consider the following 379-residue polypeptide: Sulfate adenylyltransferase (379 aa).

This sequence belongs to the sulfate adenylyltransferase family.

It carries out the reaction sulfate + ATP + H(+) = adenosine 5'-phosphosulfate + diphosphate. Its pathway is sulfur metabolism; hydrogen sulfide biosynthesis; sulfite from sulfate: step 1/3. In Cenarchaeum symbiosum (strain A), this protein is Sulfate adenylyltransferase.